The chain runs to 363 residues: 3-isopropylmalate dehydrogenase (363 aa).

78–91 (GKKWDTLPINERPE) contributes to the NAD(+) binding site. 4 residues coordinate substrate: R99, R109, R138, and D227. Mg(2+)-binding residues include D227, D251, and D255. 285–297 (GSAPDIQGKNIAN) contributes to the NAD(+) binding site.

This sequence belongs to the isocitrate and isopropylmalate dehydrogenases family. LeuB type 1 subfamily. Homodimer. It depends on Mg(2+) as a cofactor. The cofactor is Mn(2+).

Its subcellular location is the cytoplasm. It catalyses the reaction (2R,3S)-3-isopropylmalate + NAD(+) = 4-methyl-2-oxopentanoate + CO2 + NADH. Its pathway is amino-acid biosynthesis; L-leucine biosynthesis; L-leucine from 3-methyl-2-oxobutanoate: step 3/4. Catalyzes the oxidation of 3-carboxy-2-hydroxy-4-methylpentanoate (3-isopropylmalate) to 3-carboxy-4-methyl-2-oxopentanoate. The product decarboxylates to 4-methyl-2 oxopentanoate. The protein is 3-isopropylmalate dehydrogenase of Buchnera aphidicola subsp. Diuraphis noxia.